The primary structure comprises 327 residues: Xylosidase/arabinosidase 43A (327 aa).

The Proton acceptor role is filled by aspartate 12. Glutamate 228 (proton donor) is an active-site residue.

This sequence belongs to the glycosyl hydrolase 43 family.

Its subcellular location is the secreted. It catalyses the reaction Hydrolysis of (1-&gt;4)-beta-D-xylans, to remove successive D-xylose residues from the non-reducing termini.. The enzyme catalyses Hydrolysis of terminal non-reducing alpha-L-arabinofuranoside residues in alpha-L-arabinosides.. With respect to regulation, activity is inhibited by Ag(+), Li(+), Pb(2+), Cu(2+), Cr(3+), Co(3+), Fe(3+), Ni(2+), Mg(2+), Zn(2+), EDTA and SDS; but not by Mn(2+), Ca(2+) and beta-mercaptoethanol. Bifunctional beta-xylosidase/alpha-L-arabinosidases with a low level of xylanase activity. Is most active on 4-nitrophenyl beta-D-xylopyranoside (pNPX) (defined as 100%), moderate on p-nitrophenyl-alpha-L-arabinofuranoside (pNPA) (23.7%), and weak on beechwood xylan (15.9%) and birchwood xylan (15.2%). Is able to attack xylooligosacchardies with degrees of polymerisation of 2-5, releasing the amounts of reducing sugars in the order of xylopentose &gt; xylotetraose &gt; xylotriose &gt; xylobiose, i.e. the rate of xylose released from xylooligosacchardies increased with the chain length. No activity is detected in the presence of carboxymethyl cellulose-sodium (CMC-Na), sugar beet arabinan, AZCL-arabinan (debranched), 4-nitrophenyl a-D - galactopyranoside, 2-nitrophenyl beta-D-galactopyranoside, and 4-nitrophenyl alpha-D-glucopyranoside. The protein is Xylosidase/arabinosidase 43A of Humicola insolens (Soft-rot fungus).